We begin with the raw amino-acid sequence, 105 residues long: Thioredoxin (105 aa).

Positions 1–105 (MANNVTDSSF…SLLDWINKSI (105 aa)) constitute a Thioredoxin domain. C30 and C33 are disulfide-bonded.

The protein belongs to the thioredoxin family.

In terms of biological role, component of the thioredoxin-thioredoxin reductase system. Participates in various redox reactions through the reversible oxidation of its active center dithiol to a disulfide and catalyzes dithiol-disulfide exchange reactions. The chain is Thioredoxin (trxA) from Rickettsia felis (strain ATCC VR-1525 / URRWXCal2) (Rickettsia azadi).